Here is a 340-residue protein sequence, read N- to C-terminus: Heat-inducible transcription repressor HrcA (340 aa).

This sequence belongs to the HrcA family.

Functionally, negative regulator of class I heat shock genes (grpE-dnaK-dnaJ and groELS operons). Prevents heat-shock induction of these operons. The polypeptide is Heat-inducible transcription repressor HrcA (Burkholderia ambifaria (strain MC40-6)).